Here is a 316-residue protein sequence, read N- to C-terminus: Cuticle collagen 7 (316 aa).

The N-terminal stretch at 1–34 is a signal peptide; it reads MSSATFLSVMAGLSGIVVFGALISVFHIYSDINS. 2 disordered regions span residues 78-269 and 281-316; these read KQSQ…DAAY and HRNV…HVQA. Residues 79–90 show a composition bias toward polar residues; that stretch reads QSQCNCGQQASN. Triple-helical region regions lie at residues 94–126, 139–198, and 204–263; these read GPPG…AGPS, GLPG…PGKS, and GLPG…DGTP. Low complexity-rich tracts occupy residues 110-125, 137-147, and 177-198; these read QPGQ…VAGP, PQGLPGPAGVP, and AGSA…PGKS. A compositionally biased stretch (pro residues) spans 209–221; sequence SGAPGPQGPPGAP. A compositionally biased stretch (low complexity) spans 241 to 260; it reads PNGQPGHPGQDGQPGAPGND.

The protein belongs to the cuticular collagen family. In terms of assembly, collagen polypeptide chains are complexed within the cuticle by disulfide bonds and other types of covalent cross-links.

In terms of biological role, nematode cuticles are composed largely of collagen-like proteins. The cuticle functions both as an exoskeleton and as a barrier to protect the worm from its environment. This chain is Cuticle collagen 7 (col-7), found in Caenorhabditis elegans.